A 219-amino-acid chain; its full sequence is Sporamin A (219 aa).

Positions 1-23 are cleaved as a signal peptide; it reads MKALTLALFLALSLYLLPNPAHS.

The protein belongs to the protease inhibitor I3 (leguminous Kunitz-type inhibitor) family. In terms of tissue distribution, accumulates specifically in tuberous roots and tubers upon tuberization. Sporamin accounts 60 to 80% of the total soluble protein of the organ.

It localises to the vacuole. In terms of biological role, major tuberous root protein. The sequence is that of Sporamin A (GSPO-A1) from Ipomoea batatas (Sweet potato).